Here is a 335-residue protein sequence, read N- to C-terminus: Anthranilate phosphoribosyltransferase (335 aa).

Residues glycine 79, 82-83, threonine 87, 89-92, 107-115, and alanine 119 contribute to the 5-phospho-alpha-D-ribose 1-diphosphate site; these read GD, NIST, and KHGNRSASS. Glycine 79 contacts anthranilate. Residue serine 91 participates in Mg(2+) binding. Asparagine 110 is an anthranilate binding site. Arginine 165 provides a ligand contact to anthranilate. Aspartate 224 and glutamate 225 together coordinate Mg(2+).

The protein belongs to the anthranilate phosphoribosyltransferase family. In terms of assembly, homodimer. It depends on Mg(2+) as a cofactor.

The enzyme catalyses N-(5-phospho-beta-D-ribosyl)anthranilate + diphosphate = 5-phospho-alpha-D-ribose 1-diphosphate + anthranilate. It participates in amino-acid biosynthesis; L-tryptophan biosynthesis; L-tryptophan from chorismate: step 2/5. In terms of biological role, catalyzes the transfer of the phosphoribosyl group of 5-phosphorylribose-1-pyrophosphate (PRPP) to anthranilate to yield N-(5'-phosphoribosyl)-anthranilate (PRA). The protein is Anthranilate phosphoribosyltransferase of Methanobrevibacter smithii (strain ATCC 35061 / DSM 861 / OCM 144 / PS).